The primary structure comprises 360 residues: Phospho-N-acetylmuramoyl-pentapeptide-transferase (360 aa).

10 helical membrane-spanning segments follow: residues 3-23 (SILVGAAVALVVSILFTPYLI), 52-72 (MGGVAILVAMWAGYLVAHLTV), 81-101 (GLLVLGLTTALGIVGFLDDFI), 115-135 (AKLVGQLVASVLFAVLAMQFA), 153-173 (ITVISFGSVGFVIFAYIAISG), 187-207 (LAGGTAAMVLAIYVVISFWQF), 230-250 (IALVAGAAMAACVGFLWWNAA), 254-274 (IFMGDTGSLALGGLLAGLSMV), 282-302 (IIIGGLFVVEALSVVMQIVVF), and 333-353 (FWVLAAISAMFGLGLFYADWL).

This sequence belongs to the glycosyltransferase 4 family. MraY subfamily. Mg(2+) serves as cofactor.

The protein localises to the cell membrane. The enzyme catalyses UDP-N-acetyl-alpha-D-muramoyl-L-alanyl-gamma-D-glutamyl-meso-2,6-diaminopimeloyl-D-alanyl-D-alanine + di-trans,octa-cis-undecaprenyl phosphate = di-trans,octa-cis-undecaprenyl diphospho-N-acetyl-alpha-D-muramoyl-L-alanyl-D-glutamyl-meso-2,6-diaminopimeloyl-D-alanyl-D-alanine + UMP. It participates in cell wall biogenesis; peptidoglycan biosynthesis. Catalyzes the initial step of the lipid cycle reactions in the biosynthesis of the cell wall peptidoglycan: transfers peptidoglycan precursor phospho-MurNAc-pentapeptide from UDP-MurNAc-pentapeptide onto the lipid carrier undecaprenyl phosphate, yielding undecaprenyl-pyrophosphoryl-MurNAc-pentapeptide, known as lipid I. This Saccharopolyspora erythraea (strain ATCC 11635 / DSM 40517 / JCM 4748 / NBRC 13426 / NCIMB 8594 / NRRL 2338) protein is Phospho-N-acetylmuramoyl-pentapeptide-transferase.